A 231-amino-acid chain; its full sequence is TATA-box-binding protein (231 aa).

Tandem repeats lie at residues 58-134 (LQNI…ARII) and 148-225 (IQNI…YPVL).

This sequence belongs to the TBP family. Belongs to the TFIID complex together with the TBP-associated factors (TAFs). Binds DNA as monomer.

The protein localises to the nucleus. Its function is as follows. General transcription factor that functions at the core of the DNA-binding multiprotein factor TFIID. Binding of TFIID to the TATA box is the initial transcriptional step of the pre-initiation complex (PIC), playing a role in the activation of eukaryotic genes transcribed by RNA polymerase II. The protein is TATA-box-binding protein (tbp1) of Schizosaccharomyces pombe (strain 972 / ATCC 24843) (Fission yeast).